The primary structure comprises 691 residues: Elongation factor G (691 aa).

One can recognise a tr-type G domain in the interval 6–281 (SKYRNIGIMA…GVVDFLPSPI (276 aa)). Residues 15–22 (AHIDAGKT), 79–83 (DTPGH), and 133–136 (NKMD) each bind GTP.

This sequence belongs to the TRAFAC class translation factor GTPase superfamily. Classic translation factor GTPase family. EF-G/EF-2 subfamily.

The protein resides in the cytoplasm. Functionally, catalyzes the GTP-dependent ribosomal translocation step during translation elongation. During this step, the ribosome changes from the pre-translocational (PRE) to the post-translocational (POST) state as the newly formed A-site-bound peptidyl-tRNA and P-site-bound deacylated tRNA move to the P and E sites, respectively. Catalyzes the coordinated movement of the two tRNA molecules, the mRNA and conformational changes in the ribosome. The protein is Elongation factor G of Wolbachia pipientis wMel.